The primary structure comprises 384 residues: Potassium channel subfamily K member 18 (384 aa).

Residues 1–23 (MEVSGHPQARRCCPEALGKLFPG) are Cytoplasmic-facing. The chain crosses the membrane as a helical span at residues 24–44 (LCFLCFLVTYALVGAVVFSAI). An N-linked (GlcNAc...) asparagine glycan is attached at asparagine 70. An intramembrane region (pore-forming) is located at residues 103–129 (FLSSLFFCCTVFSTVGYGYIYPVTRLG). K(+) contacts are provided by threonine 116, valine 117, glycine 118, and tyrosine 119. The tract at residues 116 to 121 (TVGYGY) is selectivity filter 1. Residues 130–148 (KYLCMLYALFGIPLMFLVL) traverse the membrane as a helical segment. Residues 149–280 (TDTGDILATI…EVGQQVERLD (132 aa)) are Cytoplasmic-facing. The interval 200–205 (PQIIIS) is interaction with calcineurin. Positions 249–254 (RSNSCP) are interaction with YWHAH. Phosphoserine is present on residues serine 252 and serine 264. A helical transmembrane segment spans residues 281-301 (IPLPIIALIVFAYISCAAAIL). Positions 314 to 328 (FYFCFVTLTTIGFGD) form an intramembrane region, pore-forming. The segment at 323 to 328 (TIGFGD) is selectivity filter 2. The chain crosses the membrane as a helical span at residues 335 to 355 (NFFLFFSIYIIVGMEIVFIAF). The Cytoplasmic portion of the chain corresponds to 356-384 (KLVQNRLIDIYKNVMLFFAKGKFYHLVKK).

Belongs to the two pore domain potassium channel (TC 1.A.1.8) family. Homodimer. Heterodimer with KCNK2. Heterodimer with KCNK10. Interacts with calcineurin. Interacts with YWHAH, in a phosphorylation-dependent manner. In terms of processing, N-glycosylated. Phosphorylation of Ser-264 is required for the binding of 14-3-3eta/YWHAH. Calcineurin-mediated dephosphorylation enhances channel activity. In terms of tissue distribution, expressed in dorsal root ganglion and trigeminal ganglion neurons. Detected at low levels in spinal cord. Expressed in regulatory T cells (at protein level).

Its subcellular location is the cell membrane. It carries out the reaction K(+)(in) = K(+)(out). Activated by volatile anesthetics but inhibited by amide local anesthetics. Inhibited by Ba(2+) ions. Inhibited by free polyunsaturated fatty acids. Channel conductance is sensitive to intracellular pH, it decreases at acidic pH and increases at basic pH. In contrast to its mouse ortholog, it is not regulated by extracellular protons. Insensitive to changes in temperature. K(+) channel that conducts outward and inward rectifying currents at depolarized and hyperpolarized membrane potentials, respectively. The outward rectifying currents are voltage-dependent, coupled to K(+) electrochemical gradient across the membrane, whereas the inward currents can be induced in response to activation of Ca(2+)-mobilizing receptors. Homo- and heterodimerizes to form functional channels with distinct regulatory and gating properties. In trigeminal ganglia sensory neurons, the heterodimers of KCNK18/TRESK and KCNK2/TREK-1 or KCNK10/TREK-2 inhibit neuronal firing and neurogenic inflammation by stabilizing the resting membrane potential at K(+) equilibrium potential as well as by regulating the threshold of action potentials and the spike frequency. In thymocytes, conducts K(+) currents upon T cell receptor (TCR) signaling leading to sustained Ca(2+) influx and NF-kappa-B activation, FOXP3 transcription and positive selection of regulatory T cell (Treg) progenitor subsets. Appears to mediate the analgesics effects of hydroxy-alpha-sanshool, a metabolite naturally present in Schezuan pepper and other Xanthoxylum plants. This Homo sapiens (Human) protein is Potassium channel subfamily K member 18.